Consider the following 734-residue polypeptide: E3 ubiquitin-protein ligase TRIM56 (734 aa).

The RING-type zinc-finger motif lies at 21–60 (CKICLEQLHTPKTLPCLHTYCQDCLAQLDIGGQVRCPECR). 2 B box-type zinc fingers span residues 98 to 149 (KPTC…VVDL) and 164 to 205 (RQAS…CLPL). Zn(2+) contacts are provided by Cys169, His172, Cys192, and His197. Residues 215 to 303 (GLEELLAGVD…KIERQEQVAK (89 aa)) are a coiled coil. The segment covering 372–381 (EPKQSPKDSG) has biased composition (basic and acidic residues). The disordered stretch occupies residues 372-463 (EPKQSPKDSG…SPILRPNLEG (92 aa)). A compositionally biased stretch (basic residues) spans 435–448 (RPNKKKKCKGRGKS). At Ser454 the chain carries Phosphoserine.

The protein belongs to the TRIM/RBCC family. As to quaternary structure, interacts with STING1. Interacts with TICAM1.

Its subcellular location is the cytoplasm. The enzyme catalyses S-ubiquitinyl-[E2 ubiquitin-conjugating enzyme]-L-cysteine + [acceptor protein]-L-lysine = [E2 ubiquitin-conjugating enzyme]-L-cysteine + N(6)-ubiquitinyl-[acceptor protein]-L-lysine.. Its pathway is protein modification; protein ubiquitination. In terms of biological role, E3 ubiquitin-protein ligase that plays a key role in innate antiviral immunity by mediating ubiquitination of CGAS and STING1. In response to pathogen- and host-derived double-stranded DNA (dsDNA), targets STING1 to 'Lys-63'-linked ubiquitination, thereby promoting its homodimerization, a step required for the production of type I interferon IFN-beta. Also mediates monoubiquitination of CGAS, thereby promoting CGAS oligomerization and subsequent activation. Independently of its E3 ubiquitin ligase activity, positive regulator of TLR3 signaling. Potentiates extracellular double stranded RNA (dsRNA)-induced expression of IFNB1 and interferon-stimulated genes ISG15, IFIT1/ISG56, CXCL10, OASL and CCL5/RANTES. This Mus musculus (Mouse) protein is E3 ubiquitin-protein ligase TRIM56.